The following is a 517-amino-acid chain: 2-isopropylmalate synthase (517 aa).

Residues 7–269 enclose the Pyruvate carboxyltransferase domain; it reads VIIFDTTLRD…ETGIDTTQIV (263 aa). The Mn(2+) site is built by Asp16, His204, His206, and Asn240. Positions 395–517 are regulatory domain; it reads KFISQKISTE…KPKAQGSGTI (123 aa).

The protein belongs to the alpha-IPM synthase/homocitrate synthase family. LeuA type 1 subfamily. As to quaternary structure, homodimer. The cofactor is Mn(2+).

The protein localises to the cytoplasm. The catalysed reaction is 3-methyl-2-oxobutanoate + acetyl-CoA + H2O = (2S)-2-isopropylmalate + CoA + H(+). The protein operates within amino-acid biosynthesis; L-leucine biosynthesis; L-leucine from 3-methyl-2-oxobutanoate: step 1/4. Its function is as follows. Catalyzes the condensation of the acetyl group of acetyl-CoA with 3-methyl-2-oxobutanoate (2-ketoisovalerate) to form 3-carboxy-3-hydroxy-4-methylpentanoate (2-isopropylmalate). The polypeptide is 2-isopropylmalate synthase (Neisseria meningitidis serogroup A / serotype 4A (strain DSM 15465 / Z2491)).